The following is a 152-amino-acid chain: Proteolipid protein 2 (152 aa).

Residues 19-137 enclose the MARVEL domain; sequence FSRTRKGILL…DAYFTFPLRQ (119 aa). Helical transmembrane passes span 25 to 45, 48 to 68, and 85 to 105; these read GILL…FSAG, GYSS…VIYM, and FFRT…VLVE. An N-linked (GlcNAc...) asparagine glycan is attached at Asn108. The helical transmembrane segment at 112–132 threads the bilayer; that stretch reads IAAGVLGLLATCLFGYDAYFT.

The protein localises to the membrane. Its function is as follows. May play a role in cell differentiation in the intestinal epithelium. The protein is Proteolipid protein 2 (PLP2) of Oryctolagus cuniculus (Rabbit).